Consider the following 575-residue polypeptide: Flagellin B (575 aa).

Belongs to the bacterial flagellin family. In terms of assembly, heteromer of flaA and flaB.

Its subcellular location is the secreted. The protein localises to the bacterial flagellum. Its function is as follows. Flagellin is the subunit protein which polymerizes to form the filaments of bacterial flagella. The chain is Flagellin B (flaB) from Campylobacter jejuni.